Consider the following 491-residue polypeptide: MGILAVILDSVCERCSGSSLWMLSTVALLSILVVSVVINVLRQLLFKNYKEPPLVFHWFPFIGSTISYGMDPYRFFFNCREKYGDIFTFVLLGKKTTVYLGTKGNDFILNGKLRDVCAEEVYSPLTTPVFGRHVVYDCPNAKLMEQKKGPNGVFDVCKTIAEITIYTASRSLQGKEVRSRFDSTFAELYHDLDMGFAPINFMLPWAPLPHNRKRDAAQKRMTETYMEIIKERRKAGSKKDSEDMVWNLMSCMYKDGTPVPDEEIAHMMIALLMAGQHSSSSTAAWIVLHLAASPEITEELYQEQLRILGHDMPPLTYENLQKLDLHAKVIKETLRIHAPIHSIIRAVKNPMPVEGTPYVIPTSHNVLSSPGVTARSEEHFPDPLEWKPHRWDEAIAVSSEDEEKVDYGYGLVTKGTNSPYLPFGAGRHRCIGEQFAYVQLGAITAALVRLFKFSNLPGVQTLPDTDYSSLFSKPLGNSKIQFEKREPVTKA.

A helical membrane pass occupies residues 20–40 (LWMLSTVALLSILVVSVVINV). Cys430 contributes to the heme binding site.

The protein belongs to the cytochrome P450 family. Requires heme as cofactor.

It localises to the endoplasmic reticulum membrane. The catalysed reaction is a 14alpha-methyl steroid + 3 reduced [NADPH--hemoprotein reductase] + 3 O2 = a Delta(14) steroid + formate + 3 oxidized [NADPH--hemoprotein reductase] + 4 H2O + 4 H(+). The enzyme catalyses a 14alpha-methyl steroid + reduced [NADPH--hemoprotein reductase] + O2 = a 14alpha-hydroxymethyl steroid + oxidized [NADPH--hemoprotein reductase] + H2O + H(+). It carries out the reaction a 14alpha-hydroxymethyl steroid + reduced [NADPH--hemoprotein reductase] + O2 = a 14alpha-formyl steroid + oxidized [NADPH--hemoprotein reductase] + 2 H2O + H(+). It catalyses the reaction a 14alpha-formyl steroid + reduced [NADPH--hemoprotein reductase] + O2 = a Delta(14) steroid + formate + oxidized [NADPH--hemoprotein reductase] + H2O + 2 H(+). The catalysed reaction is lanosterol + 3 reduced [NADPH--hemoprotein reductase] + 3 O2 = 4,4-dimethyl-5alpha-cholesta-8,14,24-trien-3beta-ol + formate + 3 oxidized [NADPH--hemoprotein reductase] + 4 H2O + 4 H(+). The enzyme catalyses lanosterol + reduced [NADPH--hemoprotein reductase] + O2 = 32-hydroxylanosterol + oxidized [NADPH--hemoprotein reductase] + H2O + H(+). It carries out the reaction 32-hydroxylanosterol + reduced [NADPH--hemoprotein reductase] + O2 = 32-oxolanosterol + oxidized [NADPH--hemoprotein reductase] + 2 H2O + H(+). It catalyses the reaction 32-oxolanosterol + reduced [NADPH--hemoprotein reductase] + O2 = 4,4-dimethyl-5alpha-cholesta-8,14,24-trien-3beta-ol + formate + oxidized [NADPH--hemoprotein reductase] + H2O + 2 H(+). The catalysed reaction is eburicol + 3 reduced [NADPH--hemoprotein reductase] + 3 O2 = 14-demethyleburicol + formate + 3 oxidized [NADPH--hemoprotein reductase] + 4 H2O + 4 H(+). The enzyme catalyses eburicol + reduced [NADPH--hemoprotein reductase] + O2 = 32-hydroxyeburicol + oxidized [NADPH--hemoprotein reductase] + H2O + H(+). It carries out the reaction 32-hydroxyeburicol + reduced [NADPH--hemoprotein reductase] + O2 = 32-oxoeburicol + oxidized [NADPH--hemoprotein reductase] + 2 H2O + H(+). It catalyses the reaction 32-oxoeburicol + reduced [NADPH--hemoprotein reductase] + O2 = 14-demethyleburicol + formate + oxidized [NADPH--hemoprotein reductase] + H2O + 2 H(+). It functions in the pathway steroid biosynthesis; sterol biosynthesis. Sterol 14alpha-demethylase, encoded by cyp51A, cyp51B and cyp51C, that plays a critical role in the third module of ergosterol biosynthesis pathway, being ergosterol the major sterol component in fungal membranes that participates in a variety of functions. The third module or late pathway involves the ergosterol synthesis itself through consecutive reactions that mainly occur in the endoplasmic reticulum (ER) membrane. In filamentous fungi, during the initial step of this module, lanosterol (lanosta-8,24-dien-3beta-ol) can be metabolized to eburicol. Sterol 14alpha-demethylase catalyzes the three-step oxidative removal of the 14alpha-methyl group (C-32) of both these sterols in the form of formate, and converts eburicol and lanosterol to 14-demethyleburicol (4,4,24-trimethylergosta-8,14,24(28)-trienol) and 4,4-dimethyl-5alpha-cholesta-8,14,24-trien-3beta-ol, respectively, which are further metabolized by other enzymes in the pathway to ergosterol. Can also use substrates not intrinsic to fungi, such as 24,25-dihydrolanosterol (DHL), producing 4,4'-dimethyl-8,14-cholestadien-3-beta-ol, but at lower rates than the endogenous substrates. Functionally, as a target of azole drugs, plays a crucial role in azole susceptibility. This chain is Sterol 14-alpha demethylase, found in Aspergillus flavus (strain ATCC 200026 / FGSC A1120 / IAM 13836 / NRRL 3357 / JCM 12722 / SRRC 167).